The following is a 172-amino-acid chain: 6,7-dimethyl-8-ribityllumazine synthase (172 aa).

Residues phenylalanine 24, 58–60, and 82–84 each bind 5-amino-6-(D-ribitylamino)uracil; these read ALE and AVI. (2S)-2-hydroxy-3-oxobutyl phosphate is bound at residue 87–88; sequence ET. Catalysis depends on histidine 90, which acts as the Proton donor. Residue asparagine 115 participates in 5-amino-6-(D-ribitylamino)uracil binding. Arginine 129 contacts (2S)-2-hydroxy-3-oxobutyl phosphate. Residues 150–172 are disordered; sequence ALEQLDGDEDDEGEGEDDEEERA. Positions 154 to 172 are enriched in acidic residues; the sequence is LDGDEDDEGEGEDDEEERA.

This sequence belongs to the DMRL synthase family.

The enzyme catalyses (2S)-2-hydroxy-3-oxobutyl phosphate + 5-amino-6-(D-ribitylamino)uracil = 6,7-dimethyl-8-(1-D-ribityl)lumazine + phosphate + 2 H2O + H(+). Its pathway is cofactor biosynthesis; riboflavin biosynthesis; riboflavin from 2-hydroxy-3-oxobutyl phosphate and 5-amino-6-(D-ribitylamino)uracil: step 1/2. Functionally, catalyzes the formation of 6,7-dimethyl-8-ribityllumazine by condensation of 5-amino-6-(D-ribitylamino)uracil with 3,4-dihydroxy-2-butanone 4-phosphate. This is the penultimate step in the biosynthesis of riboflavin. This is 6,7-dimethyl-8-ribityllumazine synthase from Paraburkholderia phymatum (strain DSM 17167 / CIP 108236 / LMG 21445 / STM815) (Burkholderia phymatum).